Here is a 242-residue protein sequence, read N- to C-terminus: MEVLKNIRIYPLSNFITSTKNYINLPNELRNLISEEQESKLGFLHIIESDFKPSVALQKLVNCTTGDEKILIIDIVSIWSQQKQRQHGAIYMNSLSCINITGLIVFLELLYDSPMDALRRCQVDNFNFQLRGIVIDNLSFLNFESDKNYDVINLSKFEKLFKILRKLREFLGCWIITKSFPTDFYNGIENTLVDKWSIKRKSGVTLYPTKLPDSYMKGMDLIIYREVVDGRPQYRRIAALEE.

As to quaternary structure, component of the SHU complex composed of at least CSM2, PSY3, SHU1 and SHU2.

The protein resides in the nucleus. Required for resistance to the DNA-damaging agents methyl methanesulfonate (MMS), cisplatin and oxaliplatin, but not to mitomycin C. Plays a role in protection against mutation accumulation. May be a component of the recombination-repair pathway. This is Platinum sensitivity protein 3 (PSY3) from Saccharomyces cerevisiae (strain ATCC 204508 / S288c) (Baker's yeast).